Here is a 146-residue protein sequence, read N- to C-terminus: MKLVNFLKKLRNEQVTIELKNGTTVWGTLQSVSPQMNAILTDVKLTLPQPRLNKLNSNGIAMASLYLTGGQQPTASDNIASLQYINIRGNTIRQIILPDSLNLDSLLVDQKQLNSLRRSGQIANDPSKKRRRDFGAPANKRPRRGL.

One can recognise a Sm domain in the interval 2–101 (KLVNFLKKLR…IRQIILPDSL (100 aa)). Positions 118–146 (RSGQIANDPSKKRRRDFGAPANKRPRRGL) are disordered. The Nuclear localization signal motif lies at 128–144 (KKRRRDFGAPANKRPRR).

The protein belongs to the snRNP core protein family. In terms of assembly, component of the Sm core complex, present in spliceosomal snRNP U1, U2, U4/U6 and U5. The core complex contains SMB1, SMD1, SMD2, SMD3, SME1, SMX3 and SMX2 (Sm proteins B, D1, D2, D3, E, F and G, respectively), and is probably a heptameric ring structure. Belongs to the CWC complex (or CEF1-associated complex), a spliceosome sub-complex reminiscent of a late-stage spliceosome composed of the U2, U5 and U6 snRNAs and at least BUD13, BUD31, BRR2, CDC40, CEF1, CLF1, CUS1, CWC2, CWC15, CWC21, CWC22, CWC23, CWC24, CWC25, CWC27, ECM2, HSH155, IST3, ISY1, LEA1, MSL1, NTC20, PRP8, PRP9, PRP11, PRP19, PRP21, PRP22, PRP45, PRP46, SLU7, SMB1, SMD1, SMD2, SMD3, SMX2, SMX3, SNT309, SNU114, SPP2, SYF1, SYF2, RSE1 and YJU2. Component of the U4/U6-U5 tri-snRNP complex composed of the U4, U6 and U5 snRNAs and at least PRP3, PRP4, PRP6, PRP8, PRP18, PRP31, PRP38, SNU13, SNU23, SNU66, SNU114, SPP381, SMB1, SMD1, SMD2, SMD3, SMX2, SMX3, LSM2, LSM3, LSM4, LSM5, LSM6, LSM7, LSM8, BRR2 and DIB1.

It localises to the nucleus. Its subcellular location is the cytoplasm. Lays a role in pre-mRNA splicing as a core component of the spliceosomal U1, U2, U4 and U5 small nuclear ribonucleoproteins (snRNPs), the building blocks of the spliceosome. Also binds telomerase RNA and is required for its accumulation. This chain is Small nuclear ribonucleoprotein Sm D1 (SMD1), found in Saccharomyces cerevisiae (strain ATCC 204508 / S288c) (Baker's yeast).